Consider the following 165-residue polypeptide: Nucleotide-binding protein Ccur92_01650 (165 aa).

It belongs to the YajQ family.

Functionally, nucleotide-binding protein. This Campylobacter curvus (strain 525.92) protein is Nucleotide-binding protein Ccur92_01650.